Reading from the N-terminus, the 264-residue chain is Small ribosomal subunit protein eS1 (264 aa).

Residue Lys34 is modified to N6-acetyllysine; alternate. Lys34 participates in a covalent cross-link: Glycyl lysine isopeptide (Lys-Gly) (interchain with G-Cter in SUMO2); alternate. Lys56 carries the post-translational modification N6-acetyllysine. At Tyr155 the chain carries ADP-ribosyltyrosine. The disordered stretch occupies residues 233 to 264 (GEGSSSGKATGDETGAKVERADGYEPPVQESV). 2 positions are modified to phosphoserine: Ser236 and Ser237. The span at 242–255 (TGDETGAKVERADG) shows a compositional bias: basic and acidic residues. Lys249 is modified (N6-acetyllysine; alternate). Lys249 participates in a covalent cross-link: Glycyl lysine isopeptide (Lys-Gly) (interchain with G-Cter in SUMO2); alternate. A Phosphotyrosine modification is found at Tyr256. Position 263 is a phosphoserine (Ser263).

This sequence belongs to the eukaryotic ribosomal protein eS1 family. As to quaternary structure, component of the small ribosomal subunit. Mature ribosomes consist of a small (40S) and a large (60S) subunit. The 40S subunit contains about 33 different proteins and 1 molecule of RNA (18S). The 60S subunit contains about 49 different proteins and 3 molecules of RNA (28S, 5.8S and 5S). Part of the small subunit (SSU) processome, composed of more than 70 proteins and the RNA chaperone small nucleolar RNA (snoRNA) U3. In terms of processing, ADP-ribosylated at Tyr-155 by PARP1 in presence of HPF1.

It localises to the cytoplasm. The protein resides in the nucleus. It is found in the nucleolus. Component of the small ribosomal subunit. The ribosome is a large ribonucleoprotein complex responsible for the synthesis of proteins in the cell. Part of the small subunit (SSU) processome, first precursor of the small eukaryotic ribosomal subunit. During the assembly of the SSU processome in the nucleolus, many ribosome biogenesis factors, an RNA chaperone and ribosomal proteins associate with the nascent pre-rRNA and work in concert to generate RNA folding, modifications, rearrangements and cleavage as well as targeted degradation of pre-ribosomal RNA by the RNA exosome. May play a role during erythropoiesis. In Callithrix jacchus (White-tufted-ear marmoset), this protein is Small ribosomal subunit protein eS1.